A 367-amino-acid polypeptide reads, in one-letter code: UDP-galactopyranose mutase (367 aa).

Residues phenylalanine 12, 31-32 (EK), asparagine 39, and 56-57 (HI) contribute to the FAD site. Phenylalanine 12 lines the UDP-alpha-D-galactose pocket. Residues asparagine 80, threonine 152, tryptophan 156, and tyrosine 181 each coordinate UDP-alpha-D-galactose. 212 to 213 (DF) is an FAD binding site. Residues asparagine 268, arginine 278, and tyrosine 311 each contribute to the UDP-alpha-D-galactose site. Position 340 (arginine 340) interacts with FAD. Residue tyrosine 346 coordinates UDP-alpha-D-galactose. 347-352 (YDMHQV) contacts FAD.

Homodimer. The cofactor is FAD.

The catalysed reaction is UDP-alpha-D-galactose = UDP-alpha-D-galactofuranose. It participates in bacterial outer membrane biogenesis; lipopolysaccharide biosynthesis. Functionally, catalyzes the interconversion through a 2-keto intermediate of uridine diphosphogalactopyranose (UDP-GalP) into uridine diphosphogalactofuranose (UDP-GalF). This is UDP-galactopyranose mutase (glf) from Escherichia coli (strain K12).